Consider the following 545-residue polypeptide: Glucose-6-phosphate isomerase 1 (545 aa).

The active-site Proton donor is Glu356. Active-site residues include His387 and Lys508.

The protein belongs to the GPI family.

It is found in the cytoplasm. It carries out the reaction alpha-D-glucose 6-phosphate = beta-D-fructose 6-phosphate. The protein operates within carbohydrate biosynthesis; gluconeogenesis. Its pathway is carbohydrate degradation; glycolysis; D-glyceraldehyde 3-phosphate and glycerone phosphate from D-glucose: step 2/4. In terms of biological role, catalyzes the reversible isomerization of glucose-6-phosphate to fructose-6-phosphate. In Cupriavidus pinatubonensis (strain JMP 134 / LMG 1197) (Cupriavidus necator (strain JMP 134)), this protein is Glucose-6-phosphate isomerase 1.